We begin with the raw amino-acid sequence, 359 residues long: Cytochrome c oxidase subunit 2 (359 aa).

A signal peptide spans 1-28 (MEQQNKRGLKRKALLGGVLGLGGLAMAG). Residue cysteine 29 is the site of S-diacylglycerol cysteine attachment. A run of 2 helical transmembrane segments spans residues 64–84 (VWVA…TAIF) and 107–127 (VPLE…LFFF). The disordered stretch occupies residues 168–203 (PGGQDYQGSDPERQAAAEASKKDPSGDNPIHGNSKS). Residues 177 to 192 (DPERQAAAEASKKDPS) show a composition bias toward basic and acidic residues. Cu cation-binding residues include histidine 244, cysteine 285, glutamate 287, cysteine 289, histidine 293, and methionine 296. Residues 335-359 (YATSTSPFVSDRTATRDGENTQSNA) form a disordered region.

As to quaternary structure, associates with subunits I, III and IV to form cytochrome c oxidase. The 4 subunit cytochrome c oxidase forms a supercomplex with the menaquinol-cytochrome c reductase complex (cytochrome bc1). Binuclear copper center (CuA) serves as cofactor.

It is found in the cell membrane. The enzyme catalyses 4 Fe(II)-[cytochrome c] + O2 + 8 H(+)(in) = 4 Fe(III)-[cytochrome c] + 2 H2O + 4 H(+)(out). Its function is as follows. Subunits I and II form the functional core of the enzyme complex. Electrons originating in cytochrome c are transferred via heme a and Cu(A) to the binuclear center formed by heme a3 and Cu(B). This is Cytochrome c oxidase subunit 2 (ctaC) from Corynebacterium glutamicum (strain ATCC 13032 / DSM 20300 / JCM 1318 / BCRC 11384 / CCUG 27702 / LMG 3730 / NBRC 12168 / NCIMB 10025 / NRRL B-2784 / 534).